The following is a 1272-amino-acid chain: AF4/FMR2 family member 2 (1272 aa).

Disordered regions lie at residues 93–183 (IPKN…LTQD), 201–225 (QIGE…GEDA), and 283–302 (AYVR…PTLK). A compositionally biased stretch (polar residues) spans 97–107 (SVPQNPNNKNE). Over residues 151 to 160 (SKPEWSRDSH) the composition is skewed to basic and acidic residues. Over residues 161–183 (NPSTVLASQASGQPNKMQTLTQD) the composition is skewed to polar residues. Residue serine 391 is modified to Phosphoserine. Disordered stretches follow at residues 418 to 491 (KAKP…KWQL), 535 to 687 (TNAS…DQEE), 779 to 829 (SLHA…PEKK), and 842 to 903 (PPCI…QDKN). Residues 426–438 (VNPPLATPQPPPA) show a composition bias toward pro residues. Positions 439–452 (VQASGGSGSSSESE) are enriched in low complexity. Position 478 is a phosphothreonine (threonine 478). Over residues 543–558 (EPKERPLLSLIREKAR) the composition is skewed to basic and acidic residues. The span at 576 to 586 (STTSETVSQRT) shows a compositional bias: polar residues. A compositionally biased stretch (basic and acidic residues) spans 616–629 (PKEKESVELHDPPR). Over residues 630–640 (GRNKATAHKPA) the composition is skewed to basic residues. The segment covering 818-829 (PTEVAEKIPEKK) has biased composition (basic and acidic residues). 2 stretches are compositionally biased toward pro residues: residues 844–853 (CISPAPPHKP) and 874–883 (FPPPLSPLPE).

This sequence belongs to the AF4 family.

The protein localises to the nucleus speckle. Functionally, RNA-binding protein. Might be involved in alternative splicing regulation through an interaction with G-quartet RNA structure. This chain is AF4/FMR2 family member 2 (AFF2), found in Pan troglodytes (Chimpanzee).